A 331-amino-acid polypeptide reads, in one-letter code: Tetraacyldisaccharide 4'-kinase (331 aa).

55–62 (TAGGNGKT) lines the ATP pocket.

The protein belongs to the LpxK family.

The enzyme catalyses a lipid A disaccharide + ATP = a lipid IVA + ADP + H(+). The protein operates within glycolipid biosynthesis; lipid IV(A) biosynthesis; lipid IV(A) from (3R)-3-hydroxytetradecanoyl-[acyl-carrier-protein] and UDP-N-acetyl-alpha-D-glucosamine: step 6/6. In terms of biological role, transfers the gamma-phosphate of ATP to the 4'-position of a tetraacyldisaccharide 1-phosphate intermediate (termed DS-1-P) to form tetraacyldisaccharide 1,4'-bis-phosphate (lipid IVA). This is Tetraacyldisaccharide 4'-kinase from Edwardsiella ictaluri (strain 93-146).